Reading from the N-terminus, the 158-residue chain is Kalata-B3/B6 (158 aa).

The first 22 residues, 1–22 (MAKFTKSLVLCLLLAAFVGAFG), serve as a signal peptide directing secretion. The propeptide occupies 23–66 (AELSEADKANVVNEIAANIQREILKGVKSSETTLTMFLKEMQLK). Positions 67–96 (GLPTCGETCFGGTCNTPGCSCSSWPICTRN) form a cross-link, cyclopeptide (Gly-Asn). 3 cysteine pairs are disulfide-bonded: C71/C85, C75/C87, and C80/C93. Positions 97-121 (GLPKRAGVKSSETTLTMFLKEMQLK) are excised as a propeptide. The cyclopeptide (Gly-Asp) cross-link spans 122–151 (GLPTCGETCFGGTCNTPGCTCDPWPICTRD). 3 disulfide bridges follow: C126–C140, C130–C142, and C135–C148. A propeptide spanning residues 152–158 (GLPSAAA) is cleaved from the precursor.

Belongs to the cyclotide family. Moebius subfamily. Post-translationally, kalata-B3 and kalata-B6 are cyclic peptides.

Functionally, probably participates in a plant defense mechanism. Has hemolytic activity. The protein is Kalata-B3/B6 (OAK2) of Oldenlandia affinis.